Consider the following 792-residue polypeptide: Phenylalanine--tRNA ligase beta subunit (792 aa).

The region spanning Gly-39–Ala-147 is the tRNA-binding domain. Positions Pro-400 to Thr-475 constitute a B5 domain. Positions 453, 459, 462, and 463 each coordinate Mg(2+). Residues Ser-698–Arg-791 enclose the FDX-ACB domain.

It belongs to the phenylalanyl-tRNA synthetase beta subunit family. Type 1 subfamily. As to quaternary structure, tetramer of two alpha and two beta subunits. Mg(2+) is required as a cofactor.

It is found in the cytoplasm. It carries out the reaction tRNA(Phe) + L-phenylalanine + ATP = L-phenylalanyl-tRNA(Phe) + AMP + diphosphate + H(+). This chain is Phenylalanine--tRNA ligase beta subunit, found in Xanthomonas oryzae pv. oryzae (strain MAFF 311018).